A 485-amino-acid chain; its full sequence is Protein disulfide isomerase-like 5-4 (485 aa).

Residues 114–263 (VPTGSEFHPG…LVAAMETYVA (150 aa)) enclose the Thioredoxin domain. Catalysis depends on Cys-170, which acts as the Nucleophile. The helical transmembrane segment at 444–464 (FSHFITNVCAIIGGVFTVAGI) threads the bilayer.

This sequence belongs to the protein disulfide isomerase family.

Its subcellular location is the membrane. Functionally, acts as a protein-folding catalyst that interacts with nascent polypeptides to catalyze the formation, isomerization, and reduction or oxidation of disulfide bonds. May play a role in storage protein biogenesis. This Oryza sativa subsp. japonica (Rice) protein is Protein disulfide isomerase-like 5-4 (PDIL5-4).